Consider the following 296-residue polypeptide: tRNA dimethylallyltransferase (296 aa).

10–17 (GPTASGKT) serves as a coordination point for ATP. 12–17 (TASGKT) provides a ligand contact to substrate. Positions 35–38 (DSRQ) are interaction with substrate tRNA.

This sequence belongs to the IPP transferase family. As to quaternary structure, monomer. Requires Mg(2+) as cofactor.

The enzyme catalyses adenosine(37) in tRNA + dimethylallyl diphosphate = N(6)-dimethylallyladenosine(37) in tRNA + diphosphate. In terms of biological role, catalyzes the transfer of a dimethylallyl group onto the adenine at position 37 in tRNAs that read codons beginning with uridine, leading to the formation of N6-(dimethylallyl)adenosine (i(6)A). In Synechococcus sp. (strain RCC307), this protein is tRNA dimethylallyltransferase.